A 324-amino-acid chain; its full sequence is Glyoxylate/hydroxypyruvate reductase B (324 aa).

Residues arginine 237 and glutamate 266 contribute to the active site. The Proton donor role is filled by histidine 285.

The protein belongs to the D-isomer specific 2-hydroxyacid dehydrogenase family. GhrB subfamily. Homodimer.

It is found in the cytoplasm. It carries out the reaction glycolate + NADP(+) = glyoxylate + NADPH + H(+). The catalysed reaction is (R)-glycerate + NAD(+) = 3-hydroxypyruvate + NADH + H(+). It catalyses the reaction (R)-glycerate + NADP(+) = 3-hydroxypyruvate + NADPH + H(+). Its function is as follows. Catalyzes the NADPH-dependent reduction of glyoxylate and hydroxypyruvate into glycolate and glycerate, respectively. The chain is Glyoxylate/hydroxypyruvate reductase B from Shigella flexneri serotype 5b (strain 8401).